The following is a 334-amino-acid chain: Fructose-1,6-bisphosphatase class 1 (334 aa).

The Mg(2+) site is built by E89, D112, L114, and D115. Substrate is bound by residues 115–118, N208, Y241, 259–261, and K271; these read DGSS and YLY. E277 serves as a coordination point for Mg(2+).

This sequence belongs to the FBPase class 1 family. As to quaternary structure, homotetramer. Mg(2+) is required as a cofactor.

It is found in the cytoplasm. The catalysed reaction is beta-D-fructose 1,6-bisphosphate + H2O = beta-D-fructose 6-phosphate + phosphate. The protein operates within carbohydrate biosynthesis; gluconeogenesis. This is Fructose-1,6-bisphosphatase class 1 from Pectobacterium atrosepticum (strain SCRI 1043 / ATCC BAA-672) (Erwinia carotovora subsp. atroseptica).